The primary structure comprises 304 residues: Uricase (304 aa).

Alanine 2 carries the N-acetylalanine modification. Residues lysine 10 and lysine 23 each carry the N6-acetyllysine; alternate modification. Lysine 10 and lysine 23 each carry N6-succinyllysine; alternate. The active-site Charge relay system is the lysine 23. 2 positions are modified to N6-acetyllysine: lysine 27 and lysine 36. Phosphoserine is present on residues serine 39 and serine 63. Threonine 68 serves as the catalytic Charge relay system. Residues threonine 68 and aspartate 69 each contribute to the urate site. Lysine 118, lysine 122, and lysine 164 each carry N6-acetyllysine. Position 170 (phenylalanine 170) interacts with urate. N6-acetyllysine occurs at positions 175 and 185. Arginine 187 provides a ligand contact to urate. N6-acetyllysine; alternate is present on residues lysine 221 and lysine 228. 2 positions are modified to N6-succinyllysine; alternate: lysine 221 and lysine 228. Serine 232 bears the Phosphoserine mark. The urate site is built by valine 235, glutamine 236, and asparagine 262. The active-site Charge relay system is histidine 264. The residue at position 278 (lysine 278) is an N6-acetyllysine. Position 289 is a phosphotyrosine (tyrosine 289). A Microbody targeting signal motif is present at residues 302-304; sequence SRL.

Belongs to the uricase family.

It is found in the peroxisome. It catalyses the reaction urate + O2 + H2O = 5-hydroxyisourate + H2O2. It functions in the pathway purine metabolism; urate degradation; (S)-allantoin from urate: step 1/3. Its function is as follows. Catalyzes the oxidation of uric acid to 5-hydroxyisourate, which is further processed to form (S)-allantoin. This chain is Uricase (UOX), found in Macaca mulatta (Rhesus macaque).